Here is a 326-residue protein sequence, read N- to C-terminus: tRNA dimethylallyltransferase (326 aa).

Position 18–25 (18–25 (GPTASGKS)) interacts with ATP. 20–25 (TASGKS) provides a ligand contact to substrate. Interaction with substrate tRNA regions lie at residues 43–46 (DSMQ) and 167–171 (QRIAR).

This sequence belongs to the IPP transferase family. As to quaternary structure, monomer. Mg(2+) serves as cofactor.

It carries out the reaction adenosine(37) in tRNA + dimethylallyl diphosphate = N(6)-dimethylallyladenosine(37) in tRNA + diphosphate. In terms of biological role, catalyzes the transfer of a dimethylallyl group onto the adenine at position 37 in tRNAs that read codons beginning with uridine, leading to the formation of N6-(dimethylallyl)adenosine (i(6)A). The polypeptide is tRNA dimethylallyltransferase (Rhodospirillum rubrum (strain ATCC 11170 / ATH 1.1.1 / DSM 467 / LMG 4362 / NCIMB 8255 / S1)).